Here is a 160-residue protein sequence, read N- to C-terminus: Eosinophil cationic protein (160 aa).

The signal sequence occupies residues 1–27; that stretch reads MVPKLFTSQICLLLLLGLMGVEGSLHA. The required for nearly all of the bactericidal activities; partially involved in LPS-binding stretch occupies residues 28 to 72; that stretch reads RPPQFTKAQWFAIQHINVNPPRCTIAMRVINNYQRRCKNQNTFLR. H42 acts as the Proton acceptor in catalysis. 4 disulfide bridges follow: C50/C110, C64/C123, C82/C138, and C89/C98. The residue at position 60 (Y60) is a 3'-nitrotyrosine. 65–69 serves as a coordination point for substrate; it reads KNQNT. N-linked (GlcNAc...) asparagine glycosylation is found at N92 and N119. H155 serves as the catalytic Proton donor.

It belongs to the pancreatic ribonuclease family. Interacts with bacterial lipopolysaccharide (LPS) and lipoteichoic acid (LTA). In vitro interacts with phospholipid bilayers.

It is found in the secreted. Functionally, cytotoxin and helminthotoxin with low-efficiency ribonuclease activity. Possesses a wide variety of biological activities. Exhibits antibacterial activity. The sequence is that of Eosinophil cationic protein (RNASE3) from Macaca fascicularis (Crab-eating macaque).